The following is a 273-amino-acid chain: Octanoyltransferase LipM (273 aa).

Residues 33-244 enclose the BPL/LPL catalytic domain; it reads GKTPPTLRFY…AFTRLYAVEF (212 aa). The active-site Acyl-thioester intermediate is the C146.

This sequence belongs to the octanoyltransferase LipM family. In terms of assembly, monomer.

The catalysed reaction is octanoyl-[ACP] + L-lysyl-[protein] = N(6)-octanoyl-L-lysyl-[protein] + holo-[ACP] + H(+). Its pathway is protein modification; protein lipoylation via endogenous pathway; protein N(6)-(lipoyl)lysine from octanoyl-[acyl-carrier-protein]. In terms of biological role, catalyzes the transfer of endogenously produced octanoic acid from octanoyl-acyl-carrier-protein onto the lipoyl domain of GcvH, an intermediate carrier during protein lipoylation. In Moorella thermoacetica (strain ATCC 39073 / JCM 9320), this protein is Octanoyltransferase LipM.